The sequence spans 182 residues: ATP synthase subunit delta (182 aa).

This sequence belongs to the ATPase delta chain family. F-type ATPases have 2 components, F(1) - the catalytic core - and F(0) - the membrane proton channel. F(1) has five subunits: alpha(3), beta(3), gamma(1), delta(1), epsilon(1). F(0) has three main subunits: a(1), b(2) and c(10-14). The alpha and beta chains form an alternating ring which encloses part of the gamma chain. F(1) is attached to F(0) by a central stalk formed by the gamma and epsilon chains, while a peripheral stalk is formed by the delta and b chains.

The protein localises to the cell inner membrane. Functionally, f(1)F(0) ATP synthase produces ATP from ADP in the presence of a proton or sodium gradient. F-type ATPases consist of two structural domains, F(1) containing the extramembraneous catalytic core and F(0) containing the membrane proton channel, linked together by a central stalk and a peripheral stalk. During catalysis, ATP synthesis in the catalytic domain of F(1) is coupled via a rotary mechanism of the central stalk subunits to proton translocation. This protein is part of the stalk that links CF(0) to CF(1). It either transmits conformational changes from CF(0) to CF(1) or is implicated in proton conduction. The protein is ATP synthase subunit delta of Sulfurihydrogenibium sp. (strain YO3AOP1).